A 310-amino-acid polypeptide reads, in one-letter code: MSSPFLWRFLSFTQKYRGTLLAVSSVGLFAANISYHVAPEQTFRKLYQGWSKGEPVQLTAKLQGLFQEVLEETHMGVTSSYVPFSAFGFHPVSAGIPWLPSGCLIGIPFNYNDTEQDGVGIADRVLLINGKEVDWSSDAGTHLRQALNLSLDAQKFSLAREVFYAQGNSPIIQASAAPVCLSGICLSSVAIKQLLGLYSGPILLRGVYNMAVVVLGFAGYFLCSDAVSQWLDYQSDRKVAAVSKSYATGGIEFYEKILAQNRILRTLMGKQGETMYSPSGNLFPNDYLRLKNAPYTSRRDRIKNALLQME.

Residues 1–17 (MSSPFLWRFLSFTQKYR) lie on the Mitochondrial matrix side of the membrane. Residues 18-38 (GTLLAVSSVGLFAANISYHVA) traverse the membrane as a helical segment. The Mitochondrial intermembrane portion of the chain corresponds to 39–170 (PEQTFRKLYQ…EVFYAQGNSP (132 aa)). Residues 171 to 191 (IIQASAAPVCLSGICLSSVAI) form a helical membrane-spanning segment. At 192–201 (KQLLGLYSGP) the chain is on the mitochondrial matrix side. A helical membrane pass occupies residues 202–222 (ILLRGVYNMAVVVLGFAGYFL). The Mitochondrial intermembrane portion of the chain corresponds to 223–310 (CSDAVSQWLD…RIKNALLQME (88 aa)).

It belongs to the TMEM177 family.

Its subcellular location is the mitochondrion inner membrane. Functionally, plays a role in the early steps of cytochrome c oxidase subunit II (MT-CO2/COX2) maturation and is required for the stabilization of COX20 and the newly synthesized MT-CO2/COX2 protein. In Xenopus laevis (African clawed frog), this protein is Transmembrane protein 177 (tmem177).